Consider the following 578-residue polypeptide: Galectin-3-binding protein (578 aa).

Positions 1–18 (MAFLWLFSLWLLVPGTQG) are cleaved as a signal peptide. Residues 24 to 124 (MRLVNGASAN…HEKDAGVVCS (101 aa)) form the SRCR domain. Intrachain disulfides connect C49-C113, C62-C123, and C93-C103. 2 N-linked (GlcNAc...) asparagine glycosylation sites follow: N69 and N102. Residues 153 to 221 (CDLFIQVTGQ…FYSRRIEVTM (69 aa)) enclose the BTB domain. The region spanning 260 to 360 (PLELYAYAQA…VLPQELFELQ (101 aa)) is the BACK domain. N362 and N398 each carry an N-linked (GlcNAc...) asparagine glycan.

As to quaternary structure, homodimers and homomultimers. The multimers form ring-like structures with a diameter of 30-40 nm. Binds LGALS1 and LGALS3. Binds ITGB1, COL4A1, COL5A1, COL6A1, FN1 and NID. The unglycosylated form interacts with PDE4DIP; this interaction, which is PDE4DIP isoform-specific, may connect a pericentrosomal complex to the gamma-tubulin ring complex (gamma-TuRC) to promote microtubule assembly and acetylation.

The protein localises to the secreted. It is found in the extracellular space. Its subcellular location is the extracellular matrix. In terms of biological role, promotes integrin-mediated cell adhesion. May stimulate host defense against viruses and tumor cells. The polypeptide is Galectin-3-binding protein (LGALS3BP) (Mesocricetus auratus (Golden hamster)).